We begin with the raw amino-acid sequence, 450 residues long: Paired box protein Pax-8 (450 aa).

The paired DNA-binding region spans 9-135 (GHGGLNQLGG…SSINRIIRTK (127 aa)). Positions 12–68 (GLNQLGGAFVNGRPLPEVVRQRIVDLAHQGVRPCDISRQLRVSHGCVSKILGRYYET) are PAI subdomain. The segment at 87 to 135 (KVVEKIGDYKRQNPTMFAWEIRDRLLAEGVCDNDTVPSVSSINRIIRTK) is RED subdomain. Residues 159–182 (LIPSSAVTPPESPQSDSLGSTYSI) show a composition bias toward polar residues. Residues 159 to 222 (LIPSSAVTPP…QSSSSGPRKH (64 aa)) are disordered. Phosphoserine is present on S303.

Interacts with WWTR1. As to expression, expressed in the excretory system, thyroid gland and Wilms tumors.

The protein localises to the nucleus. Transcription factor for the thyroid-specific expression of the genes exclusively expressed in the thyroid cell type, maintaining the functional differentiation of such cells. The chain is Paired box protein Pax-8 (PAX8) from Homo sapiens (Human).